The following is a 378-amino-acid chain: Alginate lyase (378 aa).

A signal peptide spans 1 to 28 (MQTPKLIRPTLLSMAIVSSMAWATGASA). Substrate-binding positions include 67–68 (SK), 140–141 (HT), and Tyr258.

It belongs to the polysaccharide lyase 5 family.

The protein localises to the periplasm. The catalysed reaction is Eliminative cleavage of alginate to give oligosaccharides with 4-deoxy-alpha-L-erythro-hex-4-enuronosyl groups at their non-reducing ends and beta-D-mannuronate at their reducing end.. Catalyzes the depolymerization of alginate by cleaving the beta-1,4 glycosidic bond between two adjacent sugar residues via a beta-elimination mechanism. May serve to degrade mislocalized alginate that is trapped in the periplasmic space. This Pseudomonas syringae pv. tomato (strain ATCC BAA-871 / DC3000) protein is Alginate lyase.